The sequence spans 344 residues: Putative [LysW]-lysine/[LysW]-ornithine hydrolase (344 aa).

His66 provides a ligand contact to Zn(2+). Asp68 is a catalytic residue. Zn(2+) is bound at residue Asp90. The active-site Proton acceptor is the Glu117. Residues Glu118, Glu139, and His297 each coordinate Zn(2+).

It belongs to the peptidase M20A family. LysK subfamily. Zn(2+) serves as cofactor. It depends on Co(2+) as a cofactor.

The protein resides in the cytoplasm. The catalysed reaction is [amino-group carrier protein]-C-terminal-gamma-(L-lysyl)-L-glutamate + H2O = [amino-group carrier protein]-C-terminal-L-glutamate + L-lysine. It catalyses the reaction [amino-group carrier protein]-C-terminal-gamma-(L-ornithyl)-L-glutamate + H2O = [amino-group carrier protein]-C-terminal-L-glutamate + L-ornithine. The protein operates within amino-acid biosynthesis; L-lysine biosynthesis via AAA pathway; L-lysine from L-alpha-aminoadipate (Thermus route): step 5/5. It participates in amino-acid biosynthesis; L-arginine biosynthesis. Catalyzes the release of L-lysine from [LysW]-gamma-L-lysine and the release of L-ornithine from [LysW]-L-ornithine. In Thermococcus kodakarensis (strain ATCC BAA-918 / JCM 12380 / KOD1) (Pyrococcus kodakaraensis (strain KOD1)), this protein is Putative [LysW]-lysine/[LysW]-ornithine hydrolase.